A 623-amino-acid polypeptide reads, in one-letter code: Regulatory solute carrier protein family 1 member 1 (623 aa).

3 stretches are compositionally biased toward polar residues: residues 1 to 16, 83 to 99, and 133 to 144; these read MSSLPTSDGFNHQAHP, CASSADNAPANQTPAIP, and EASLSVTTTRMQ. Disordered stretches follow at residues 1-48, 71-99, 116-189, and 433-493; these read MSSL…PDSI, RKEQLPLQDPSDCASSADNAPANQTPAIP, SAEG…APHD, and EELT…PHCT. Basic and acidic residues-rich tracts occupy residues 150–159, 170–180, and 460–473; these read IGEKGWHPEY, QHEEPRNEQHE, and LVDKENVPRSRESV. A compositionally biased stretch (polar residues) spans 474-491; it reads NESSLVTLDSAKTSNQPH. Residues 577–617 form the UBA domain; that stretch reads IFPAADIDRILRAGFTLQEALGALHRVGGNADLALLVLLAK.

In terms of assembly, interacts with YRDC. Renal outer cortex and outer medulla, small intestine and liver.

Its subcellular location is the cell membrane. The protein resides in the nucleus. The protein localises to the golgi apparatus. It localises to the trans-Golgi network. In terms of biological role, mediates transcriptional and post-transcriptional regulation of SLC5A1. Inhibits a dynamin and PKC-dependent exocytotic pathway of SLC5A1. Also involved in transcriptional regulation of SLC22A2. Exhibits glucose-dependent, short-term inhibition of SLC5A1 and SLC22A2 by inhibiting the release of vesicles from the trans-Golgi network. This is Regulatory solute carrier protein family 1 member 1 (RSC1A1) from Sus scrofa (Pig).